Reading from the N-terminus, the 914-residue chain is Beta-mannosidase A (914 aa).

Residues 1-20 (MRFTATAAALVASSIPATLG) form the signal peptide. 7 N-linked (GlcNAc...) asparagine glycosylation sites follow: Asn-39, Asn-79, Asn-230, Asn-265, Asn-299, Asn-309, and Asn-330. The active-site Proton donor is the Glu-462. 8 N-linked (GlcNAc...) asparagine glycosylation sites follow: Asn-591, Asn-614, Asn-641, Asn-721, Asn-744, Asn-773, Asn-784, and Asn-909.

It belongs to the glycosyl hydrolase 2 family. Beta-mannosidase A subfamily. As to quaternary structure, homodimer.

The protein localises to the secreted. It catalyses the reaction Hydrolysis of terminal, non-reducing beta-D-mannose residues in beta-D-mannosides.. It participates in glycan metabolism; N-glycan degradation. Its function is as follows. Exoglycosidase that cleaves the single beta-linked mannose residue from the non-reducing end of beta-mannosidic oligosaccharides of various complexity and length. Involved in the degradation of polymeric mannan and galactomannan. The polypeptide is Beta-mannosidase A (mndA) (Aspergillus flavus (strain ATCC 200026 / FGSC A1120 / IAM 13836 / NRRL 3357 / JCM 12722 / SRRC 167)).